A 208-amino-acid chain; its full sequence is Glycerol-3-phosphate acyltransferase 1 (208 aa).

The next 5 membrane-spanning stretches (helical) occupy residues 52–72 (VVLM…YLLI), 77–97 (WVIL…WLDF), 112–132 (FLLP…LVFI), 140–160 (IALA…YGSH), and 161–181 (SEFA…KFVL).

This sequence belongs to the PlsY family. As to quaternary structure, probably interacts with PlsX.

Its subcellular location is the cell membrane. It catalyses the reaction an acyl phosphate + sn-glycerol 3-phosphate = a 1-acyl-sn-glycero-3-phosphate + phosphate. The protein operates within lipid metabolism; phospholipid metabolism. Functionally, catalyzes the transfer of an acyl group from acyl-phosphate (acyl-PO(4)) to glycerol-3-phosphate (G3P) to form lysophosphatidic acid (LPA). This enzyme utilizes acyl-phosphate as fatty acyl donor, but not acyl-CoA or acyl-ACP. This Dehalococcoides mccartyi (strain ATCC BAA-2266 / KCTC 15142 / 195) (Dehalococcoides ethenogenes (strain 195)) protein is Glycerol-3-phosphate acyltransferase 1.